Consider the following 635-residue polypeptide: 1-deoxy-D-xylulose-5-phosphate synthase (635 aa).

Thiamine diphosphate is bound by residues histidine 77 and 118–120; that span reads GHA. A Mg(2+)-binding site is contributed by aspartate 149. Thiamine diphosphate is bound by residues 150-151, asparagine 178, phenylalanine 290, and glutamate 375; that span reads GS. A Mg(2+)-binding site is contributed by asparagine 178.

Belongs to the transketolase family. DXPS subfamily. As to quaternary structure, homodimer. It depends on Mg(2+) as a cofactor. The cofactor is thiamine diphosphate.

The enzyme catalyses D-glyceraldehyde 3-phosphate + pyruvate + H(+) = 1-deoxy-D-xylulose 5-phosphate + CO2. It participates in metabolic intermediate biosynthesis; 1-deoxy-D-xylulose 5-phosphate biosynthesis; 1-deoxy-D-xylulose 5-phosphate from D-glyceraldehyde 3-phosphate and pyruvate: step 1/1. In terms of biological role, catalyzes the acyloin condensation reaction between C atoms 2 and 3 of pyruvate and glyceraldehyde 3-phosphate to yield 1-deoxy-D-xylulose-5-phosphate (DXP). This Chlorobium phaeovibrioides (strain DSM 265 / 1930) (Prosthecochloris vibrioformis (strain DSM 265)) protein is 1-deoxy-D-xylulose-5-phosphate synthase.